The following is a 477-amino-acid chain: Protoporphyrinogen oxidase (477 aa).

FAD-binding positions include 9–14 (GGGISG), W42, 57–60 (GPRG), V257, A449, and 454–456 (VAV).

This sequence belongs to the protoporphyrinogen/coproporphyrinogen oxidase family. Protoporphyrinogen oxidase subfamily. As to quaternary structure, monomer. Homodimer. FAD serves as cofactor.

Its subcellular location is the mitochondrion inner membrane. The enzyme catalyses protoporphyrinogen IX + 3 O2 = protoporphyrin IX + 3 H2O2. It participates in porphyrin-containing compound metabolism; protoporphyrin-IX biosynthesis; protoporphyrin-IX from protoporphyrinogen-IX: step 1/1. Its function is as follows. Catalyzes the 6-electron oxidation of protoporphyrinogen-IX to form protoporphyrin-IX. This Macaca fascicularis (Crab-eating macaque) protein is Protoporphyrinogen oxidase (PPOX).